Reading from the N-terminus, the 206-residue chain is Orotate phosphoribosyltransferase (206 aa).

Residues Arg-97, Lys-98, Lys-101, and 125 to 133 (NDVIASGRS) contribute to the 5-phospho-alpha-D-ribose 1-diphosphate site. Arg-157 contacts orotate.

Belongs to the purine/pyrimidine phosphoribosyltransferase family. PyrE subfamily. In terms of assembly, homodimer. The cofactor is Mg(2+).

It carries out the reaction orotidine 5'-phosphate + diphosphate = orotate + 5-phospho-alpha-D-ribose 1-diphosphate. It functions in the pathway pyrimidine metabolism; UMP biosynthesis via de novo pathway; UMP from orotate: step 1/2. Its function is as follows. Catalyzes the transfer of a ribosyl phosphate group from 5-phosphoribose 1-diphosphate to orotate, leading to the formation of orotidine monophosphate (OMP). The chain is Orotate phosphoribosyltransferase from Chlamydia felis (strain Fe/C-56) (Chlamydophila felis).